The sequence spans 236 residues: Large ribosomal subunit protein uL3 (236 aa).

Low complexity predominate over residues 139–149 (SVSHRSHGSTG). Residues 139-165 (SVSHRSHGSTGQRQDPGKVFKGKKMAG) are disordered. Residue glutamine 152 is modified to N5-methylglutamine.

This sequence belongs to the universal ribosomal protein uL3 family. As to quaternary structure, part of the 50S ribosomal subunit. Forms a cluster with proteins L14 and L19. In terms of processing, methylated by PrmB.

Its function is as follows. One of the primary rRNA binding proteins, it binds directly near the 3'-end of the 23S rRNA, where it nucleates assembly of the 50S subunit. The chain is Large ribosomal subunit protein uL3 from Pelagibacter ubique (strain HTCC1062).